A 751-amino-acid chain; its full sequence is Catalase-peroxidase (751 aa).

The tryptophyl-tyrosyl-methioninium (Trp-Tyr) (with M-266) cross-link spans 92–240; the sequence is WHSAGTYRVT…VAAAHMGLIY (149 aa). His93 serves as the catalytic Proton acceptor. Positions 240–266 form a cross-link, tryptophyl-tyrosyl-methioninium (Tyr-Met) (with W-92); that stretch reads YVNPEGPDGVPDPIAAARDIRTTFHRM. His281 contacts heme b.

Belongs to the peroxidase family. Peroxidase/catalase subfamily. Homodimer or homotetramer. Heme b is required as a cofactor. In terms of processing, formation of the three residue Trp-Tyr-Met cross-link is important for the catalase, but not the peroxidase activity of the enzyme.

Its subcellular location is the cytoplasm. It carries out the reaction H2O2 + AH2 = A + 2 H2O. The catalysed reaction is 2 H2O2 = O2 + 2 H2O. In terms of biological role, bifunctional enzyme with both catalase and broad-spectrum peroxidase activity. The protein is Catalase-peroxidase of Phaeosphaeria nodorum (strain SN15 / ATCC MYA-4574 / FGSC 10173) (Glume blotch fungus).